The sequence spans 284 residues: uncharacterized protein (284 aa).

10 N-linked (GlcNAc...) asparagine; by host glycosylation sites follow: asparagine 79, asparagine 102, asparagine 111, asparagine 147, asparagine 162, asparagine 174, asparagine 196, asparagine 211, asparagine 228, and asparagine 234. The helical transmembrane segment at 239–259 (AFTYGSWGVAMLLFAAVMVLV) threads the bilayer.

It belongs to the RL11 family.

It localises to the membrane. This is an uncharacterized protein from Human cytomegalovirus (strain AD169) (HHV-5).